Consider the following 297-residue polypeptide: Homoserine kinase (297 aa).

82 to 92 (PLTRGLGSSAS) is an ATP binding site.

This sequence belongs to the GHMP kinase family. Homoserine kinase subfamily.

The protein resides in the cytoplasm. It catalyses the reaction L-homoserine + ATP = O-phospho-L-homoserine + ADP + H(+). The protein operates within amino-acid biosynthesis; L-threonine biosynthesis; L-threonine from L-aspartate: step 4/5. Functionally, catalyzes the ATP-dependent phosphorylation of L-homoserine to L-homoserine phosphate. The protein is Homoserine kinase of Bacillus cereus (strain AH187).